The sequence spans 569 residues: Protein angel homolog 2 (569 aa).

Disordered regions lie at residues 1-22 (MRKG…GVSP), 63-92 (LQHP…WSSW), and 109-155 (GLME…WLRN). Residues 63–72 (LQHPSSSFST) are compositionally biased toward polar residues. Residues 139–150 (PPKGSRSPKGSP) are compositionally biased toward low complexity.

Belongs to the CCR4/nocturin family.

In Danio rerio (Zebrafish), this protein is Protein angel homolog 2 (angel2).